The sequence spans 241 residues: Phosphoadenosine 5'-phosphosulfate reductase (241 aa).

The disordered stretch occupies residues 221–241; it reads GADPRSGRWRGKAKTECGLHA. The active-site Nucleophile; cysteine thiosulfonate intermediate is C237.

The protein belongs to the PAPS reductase family. CysH subfamily.

It localises to the cytoplasm. The enzyme catalyses [thioredoxin]-disulfide + sulfite + adenosine 3',5'-bisphosphate + 2 H(+) = [thioredoxin]-dithiol + 3'-phosphoadenylyl sulfate. It participates in sulfur metabolism; hydrogen sulfide biosynthesis; sulfite from sulfate: step 3/3. In terms of biological role, catalyzes the formation of sulfite from phosphoadenosine 5'-phosphosulfate (PAPS) using thioredoxin as an electron donor. The protein is Phosphoadenosine 5'-phosphosulfate reductase of Gloeobacter violaceus (strain ATCC 29082 / PCC 7421).